Here is a 157-residue protein sequence, read N- to C-terminus: Crossover junction endodeoxyribonuclease RuvC (157 aa).

Active-site residues include Asp-7, Glu-66, and Asp-139. Residues Asp-7, Glu-66, and Asp-139 each coordinate Mg(2+).

The protein belongs to the RuvC family. As to quaternary structure, homodimer which binds Holliday junction (HJ) DNA. The HJ becomes 2-fold symmetrical on binding to RuvC with unstacked arms; it has a different conformation from HJ DNA in complex with RuvA. In the full resolvosome a probable DNA-RuvA(4)-RuvB(12)-RuvC(2) complex forms which resolves the HJ. The cofactor is Mg(2+).

It is found in the cytoplasm. The enzyme catalyses Endonucleolytic cleavage at a junction such as a reciprocal single-stranded crossover between two homologous DNA duplexes (Holliday junction).. Its function is as follows. The RuvA-RuvB-RuvC complex processes Holliday junction (HJ) DNA during genetic recombination and DNA repair. Endonuclease that resolves HJ intermediates. Cleaves cruciform DNA by making single-stranded nicks across the HJ at symmetrical positions within the homologous arms, yielding a 5'-phosphate and a 3'-hydroxyl group; requires a central core of homology in the junction. The consensus cleavage sequence is 5'-(A/T)TT(C/G)-3'. Cleavage occurs on the 3'-side of the TT dinucleotide at the point of strand exchange. HJ branch migration catalyzed by RuvA-RuvB allows RuvC to scan DNA until it finds its consensus sequence, where it cleaves and resolves the cruciform DNA. This chain is Crossover junction endodeoxyribonuclease RuvC, found in Helicobacter pylori (strain P12).